Consider the following 417-residue polypeptide: Serine hydroxymethyltransferase (417 aa).

Residues L121 and 125-127 each bind (6S)-5,6,7,8-tetrahydrofolate; that span reads GHL. N6-(pyridoxal phosphate)lysine is present on K229. 355-357 lines the (6S)-5,6,7,8-tetrahydrofolate pocket; sequence SPF.

It belongs to the SHMT family. Homodimer. It depends on pyridoxal 5'-phosphate as a cofactor.

Its subcellular location is the cytoplasm. It catalyses the reaction (6R)-5,10-methylene-5,6,7,8-tetrahydrofolate + glycine + H2O = (6S)-5,6,7,8-tetrahydrofolate + L-serine. It functions in the pathway one-carbon metabolism; tetrahydrofolate interconversion. It participates in amino-acid biosynthesis; glycine biosynthesis; glycine from L-serine: step 1/1. Catalyzes the reversible interconversion of serine and glycine with tetrahydrofolate (THF) serving as the one-carbon carrier. This reaction serves as the major source of one-carbon groups required for the biosynthesis of purines, thymidylate, methionine, and other important biomolecules. Also exhibits THF-independent aldolase activity toward beta-hydroxyamino acids, producing glycine and aldehydes, via a retro-aldol mechanism. This is Serine hydroxymethyltransferase from Shewanella frigidimarina (strain NCIMB 400).